The primary structure comprises 76 residues: UPF0154 protein LCA_1273 (76 aa).

A helical membrane pass occupies residues 3 to 23 (IGIGVLIFVIGALLGAVAGFF). A disordered region spans residues 55-76 (PSEKKLNQMMSSMKAQQKRSKK).

The protein belongs to the UPF0154 family.

The protein resides in the cell membrane. The protein is UPF0154 protein LCA_1273 of Latilactobacillus sakei subsp. sakei (strain 23K) (Lactobacillus sakei subsp. sakei).